The following is a 299-amino-acid chain: Circadian clock oscillator protein KaiA (299 aa).

One can recognise a KaiA N-terminal domain in the interval 1 to 169 (MVSKLSLYLV…RLAEKLRERL (169 aa)). The segment at 3-135 (SKLSLYLVTP…LHLAPSCALS (133 aa)) is psR domain, binds oxidized quinones. The flexible linker stretch occupies residues 170–178 (GYLGVYYKR). A KaiA C-terminal domain is found at 179–287 (NPKYFYRSLS…CEMYRRSIPR (109 aa)).

As to quaternary structure, homodimer. The KaiABC complex composition changes during the circadian cycle to control KaiC phosphorylation. Complexes KaiC(6), KaiA(2-4):KaiC(6), KaiB(6):KaiC(6) and KaiC(6):KaiB(6):KaiA(12) are among the most important forms, many form cooperatively. KaiA and CikA bind to the same region of the KaiB(fs) form and therefore compete.

In terms of biological role, key component of the KaiABC oscillator complex, which constitutes the main circadian regulator in cyanobacteria. Complex composition changes during the circadian cycle to control KaiC phosphorylation. KaiA stimulates KaiC autophosphorylation, while KaiB sequesters KaiA, leading to KaiC autodephosphorylation. KaiA binding to the KaiC CII domain during the subjective day yields KaiA(2-4):KaiC(6) complexes which stimulate KaiC autophosphorylation. Phospho-Ser-431 KaiC accumulation triggers binding of KaiB during the subjective night to form the KaiB(6):KaiC(6) complex, leading to changes in the output regulators CikA and SasA. KaiB(6):KaiC(6) formation exposes a site for KaiA binding on KaiB that sequesters KaiA from KaiC's CII domain, making the KaiC(6):KaiB(6):KaiA(12) complex resulting in KaiC autodephosphorylation. Complete dephosphorylation of KaiC leads to dissociation of KaiA(2):KaiB(1), completing 1 cycle of the Kai oscillator. Functionally, binds oxidized quinones via the N-terminal PsR domain, allowing it to sense redox changes and possibly mediate clock input. This is Circadian clock oscillator protein KaiA from Picosynechococcus sp. (strain ATCC 27264 / PCC 7002 / PR-6) (Agmenellum quadruplicatum).